Reading from the N-terminus, the 211-residue chain is Ribonuclease HII (211 aa).

Residues F17 to S211 enclose the RNase H type-2 domain. D23, E24, and D119 together coordinate a divalent metal cation.

It belongs to the RNase HII family. Requires Mn(2+) as cofactor. The cofactor is Mg(2+).

It is found in the cytoplasm. The enzyme catalyses Endonucleolytic cleavage to 5'-phosphomonoester.. Its function is as follows. Endonuclease that specifically degrades the RNA of RNA-DNA hybrids. The protein is Ribonuclease HII of Trichodesmium erythraeum (strain IMS101).